Consider the following 579-residue polypeptide: Fatty-acid amide hydrolase 1 (579 aa).

The helical transmembrane segment at 9–29 (TLSGVSGVCLACSLLSAAVVL) threads the bilayer. Residues 30-403 (RWTGRQKARG…GDFVDPCLGD (374 aa)) are Cytoplasmic-facing. Catalysis depends on lysine 142, which acts as the Charge relay system. Residues methionine 191, serine 217, and 238–241 (IGGS) each bind substrate. The Charge relay system role is filled by serine 217. The active-site Acyl-ester intermediate is the serine 241. Serine 241 carries the post-translational modification Phosphoserine. An intramembrane segment occupies 404 to 433 (LILILRLPSWFKRLLSLLLKPLFPRLAAFL). Topologically, residues 434 to 579 (NSMRPRSAEK…QLMTPQKQPS (146 aa)) are cytoplasmic.

The protein belongs to the amidase family. Homodimer. As to expression, found in neuronal cells throughout the CNS. Expressed in liver and brain, and to a lesser extent in spleen, lung, kidney and testes.

It localises to the endoplasmic reticulum membrane. Its subcellular location is the golgi apparatus membrane. It catalyses the reaction N-(5Z,8Z,11Z,14Z-eicosatetraenoyl)-ethanolamine + H2O = ethanolamine + (5Z,8Z,11Z,14Z)-eicosatetraenoate. It carries out the reaction (9Z)-octadecenamide + H2O = (9Z)-octadecenoate + NH4(+). The catalysed reaction is 2-(5Z,8Z,11Z,14Z-eicosatetraenoyl)-glycerol + H2O = glycerol + (5Z,8Z,11Z,14Z)-eicosatetraenoate + H(+). The enzyme catalyses (9Z,12Z,15Z)-octadecatrienamide + H2O = (9Z,12Z,15Z)-octadecatrienoate + NH4(+). It catalyses the reaction (5Z,8Z,11Z,14Z)-eicosatetraenamide + H2O = (5Z,8Z,11Z,14Z)-eicosatetraenoate + NH4(+). It carries out the reaction (6Z)-octadecenamide + H2O = (6Z)-octadecenoate + NH4(+). The catalysed reaction is (15Z)-tetracosenamide + H2O = (15Z)-tetracosenoate + NH4(+). The enzyme catalyses (8Z,11Z,14Z)-eicosatrienamide + H2O = (8Z,11Z,14Z)-eicosatrienoate + NH4(+). It catalyses the reaction (11Z,14Z,17Z)-eicosatrienamide + H2O = (11Z,14Z,17Z)-eicosatrienoate + NH4(+). It carries out the reaction (11Z,14Z)-eicosadienamide + H2O = (11Z,14Z)-eicosadienoate + NH4(+). The catalysed reaction is (9Z,12Z)-octadecadienamide + H2O = (9Z,12Z)-octadecadienoate + NH4(+). The enzyme catalyses tetradecamide + H2O = tetradecanoate + NH4(+). It catalyses the reaction N-(9Z-octadecenoyl) ethanolamine + H2O = ethanolamine + (9Z)-octadecenoate. It carries out the reaction N-(9Z-octadecenoyl)-taurine + H2O = taurine + (9Z)-octadecenoate. The catalysed reaction is 1-O-methyl-(5Z,8Z,11Z,14Z)-eicosatetraenoate + H2O = methanol + (5Z,8Z,11Z,14Z)-eicosatetraenoate + H(+). The enzyme catalyses (11Z)-eicosenamide + H2O = (11Z)-eicosenoate + NH4(+). It catalyses the reaction N-(9Z-hexadecenoyl) ethanolamine + H2O = (9Z)-hexadecenoate + ethanolamine. It carries out the reaction N-octadecanoyl ethanolamine + H2O = octadecanoate + ethanolamine. The catalysed reaction is N-docosanoyl-ethanolamine + H2O = docosanoate + ethanolamine. The enzyme catalyses N-tetracosanoyl-taurine + H2O = tetracosanoate + taurine. It catalyses the reaction N-(15Z-tetracosenoyl)-ethanolamine + H2O = (15Z)-tetracosenoate + ethanolamine. It carries out the reaction N-docosanoyl-taurine + H2O = docosanoate + taurine. The catalysed reaction is N-(15Z-tetracosenoyl)-taurine + H2O = (15Z)-tetracosenoate + taurine. The enzyme catalyses N-tricosanoyl-taurine + H2O = tricosanoate + taurine. It catalyses the reaction (9Z)-octadecenoate + glycine = N-(9Z-octadecenoyl)glycine + H2O. It carries out the reaction N-(5Z,8Z,11Z,14Z)-eicosatetraenoyl-glycine + H2O = (5Z,8Z,11Z,14Z)-eicosatetraenoate + glycine. The catalysed reaction is N-(5Z,8Z,11Z,14Z-eicosatetraenoyl)-L-serine + H2O = (5Z,8Z,11Z,14Z)-eicosatetraenoate + L-serine. Inhibited by trifluoromethyl ketone. In terms of biological role, catalyzes the hydrolysis of endogenous amidated lipids like the sleep-inducing lipid oleamide ((9Z)-octadecenamide), the endocannabinoid anandamide (N-(5Z,8Z,11Z,14Z-eicosatetraenoyl)-ethanolamine), as well as other fatty amides, to their corresponding fatty acids, thereby regulating the signaling functions of these molecules. Hydrolyzes polyunsaturated substrate anandamide preferentially as compared to monounsaturated substrates. It can also catalyze the hydrolysis of the endocannabinoid 2-arachidonoylglycerol (2-(5Z,8Z,11Z,14Z-eicosatetraenoyl)-glycerol). FAAH cooperates with PM20D1 in the hydrolysis of amino acid-conjugated fatty acids such as N-fatty acyl glycine and N-fatty acyl-L-serine, thereby acting as a physiological regulator of specific subsets of intracellular, but not of extracellular, N-fatty acyl amino acids. In Rattus norvegicus (Rat), this protein is Fatty-acid amide hydrolase 1 (Faah).